A 288-amino-acid chain; its full sequence is MKSRLKSYRRKKLGLATVIVFCSLCFLFGFYGSTLLSQNVPRVKPRLRMLDMVENGEEEASSMPHGVTGEESIGSIPFQVLSWRPRAIYFPNFATAEQCQAIIERAKVNLKPSALALRKGETAENTKGTRTSSGTFISASEESTGALDFVERKIARATMIPRSHGESFNILRYELGQKYDSHYDVFNPTEYGPQSSQRIASFLLYLSDVEEGGETMFPFENGSNMGIGYDYKQCIGLKVKPRKGDGLLFYSVFPNGTIDQTSLHGSCPVTKGEKWVATKWIRDQDQEE.

Over 1 to 12 (MKSRLKSYRRKK) the chain is Cytoplasmic. Residues 13-33 (LGLATVIVFCSLCFLFGFYGS) traverse the membrane as a helical; Signal-anchor for type II membrane protein segment. The Lumenal portion of the chain corresponds to 34-288 (TLLSQNVPRV…KWIRDQDQEE (255 aa)). The Fe2OG dioxygenase domain occupies 164 to 283 (HGESFNILRY…KWVATKWIRD (120 aa)). Fe cation is bound by residues H182 and D184. N221 and N255 each carry an N-linked (GlcNAc...) asparagine glycan. H264 is a Fe cation binding site. K274 serves as a coordination point for 2-oxoglutarate.

Belongs to the P4HA family. Requires Fe(2+) as cofactor. The cofactor is L-ascorbate.

The protein localises to the endoplasmic reticulum membrane. It is found in the golgi apparatus. It carries out the reaction L-prolyl-[collagen] + 2-oxoglutarate + O2 = trans-4-hydroxy-L-prolyl-[collagen] + succinate + CO2. Catalyzes the post-translational formation of 4-hydroxyproline in -Xaa-Pro-Gly- sequences in proline-rich peptide sequences of plant glycoproteins and other proteins. Hydroxyprolines are important constituent of many plant cell wall glycoproteins such as extensins, hydroxyproline-rich glycoproteins, lectins and arabinogalactan proteins. This is Probable prolyl 4-hydroxylase 9 from Arabidopsis thaliana (Mouse-ear cress).